The sequence spans 134 residues: Small ribosomal subunit protein uS11 (134 aa).

Over residues 113-122 (SSITDATPQP) the composition is skewed to polar residues. A disordered region spans residues 113 to 134 (SSITDATPQPHNGCRPTKRRKV).

Belongs to the universal ribosomal protein uS11 family. Part of the 30S ribosomal subunit. Interacts with proteins S7 and S18. Binds to IF-3.

In terms of biological role, located on the platform of the 30S subunit, it bridges several disparate RNA helices of the 16S rRNA. Forms part of the Shine-Dalgarno cleft in the 70S ribosome. The sequence is that of Small ribosomal subunit protein uS11 from Corynebacterium aurimucosum (strain ATCC 700975 / DSM 44827 / CIP 107346 / CN-1) (Corynebacterium nigricans).